Reading from the N-terminus, the 346-residue chain is Nucleoplasmin-like protein ANO39 (346 aa).

The residue at position 2 (Ser2) is an N-acetylserine. Asn85 carries N-linked (GlcNAc...) asparagine glycosylation. A compositionally biased stretch (acidic residues) spans 123 to 141 (DEEELEEDDEEEEEEDEVE). Residues 123–285 (DEEELEEDDE…KAKAKTDTKL (163 aa)) form a disordered region. Ser145 carries the post-translational modification Phosphoserine; by CDC2. A compositionally biased stretch (basic and acidic residues) spans 171–180 (AKLDKDADKK). Acidic residues predominate over residues 181–247 (EDDDEEEDDE…EEEEDEDEES (67 aa)). An N-linked (GlcNAc...) asparagine glycan is attached at Asn264. Positions 271-285 (GDNKPKAKAKTDTKL) are enriched in basic and acidic residues.

The protein belongs to the nucleoplasmin family. Phosphorylation occurs in oocytes during the progression of the first meiotic M phase. No phosphorylation is observed in immature oocytes. In terms of tissue distribution, expressed specifically in the oocytes of the ovaries.

The protein localises to the nucleus. It localises to the nucleolus. Its subcellular location is the cytoplasm. Binds double-stranded RNA and both single-stranded and double-stranded DNA. This chain is Nucleoplasmin-like protein ANO39, found in Patiria pectinifera (Starfish).